Here is a 373-residue protein sequence, read N- to C-terminus: Lipoyl synthase (373 aa).

The disordered stretch occupies residues 14–36 (VSNDHPSSSPLQPGVKQSGEDKI). Positions 81, 86, 92, 107, 111, 114, and 323 each coordinate [4Fe-4S] cluster. Residues 93–312 (FSHGTATFMI…EEYGMALGFS (220 aa)) enclose the Radical SAM core domain. Residues 346–373 (PAVSSTEHRERNTIASKSASKTESIHHR) are disordered. The span at 358-367 (TIASKSASKT) shows a compositional bias: polar residues.

It belongs to the radical SAM superfamily. Lipoyl synthase family. [4Fe-4S] cluster is required as a cofactor.

It is found in the cytoplasm. The catalysed reaction is [[Fe-S] cluster scaffold protein carrying a second [4Fe-4S](2+) cluster] + N(6)-octanoyl-L-lysyl-[protein] + 2 oxidized [2Fe-2S]-[ferredoxin] + 2 S-adenosyl-L-methionine + 4 H(+) = [[Fe-S] cluster scaffold protein] + N(6)-[(R)-dihydrolipoyl]-L-lysyl-[protein] + 4 Fe(3+) + 2 hydrogen sulfide + 2 5'-deoxyadenosine + 2 L-methionine + 2 reduced [2Fe-2S]-[ferredoxin]. Its pathway is protein modification; protein lipoylation via endogenous pathway; protein N(6)-(lipoyl)lysine from octanoyl-[acyl-carrier-protein]: step 2/2. In terms of biological role, catalyzes the radical-mediated insertion of two sulfur atoms into the C-6 and C-8 positions of the octanoyl moiety bound to the lipoyl domains of lipoate-dependent enzymes, thereby converting the octanoylated domains into lipoylated derivatives. The polypeptide is Lipoyl synthase (Xylella fastidiosa (strain M23)).